Consider the following 545-residue polypeptide: Esterase-5C (545 aa).

The first 19 residues, 1 to 19 (MLAARLIILLSFYWLSASA), serve as a signal peptide directing secretion. An intrachain disulfide couples cysteine 84 to cysteine 103. A glycan (N-linked (GlcNAc...) asparagine) is linked at asparagine 113. Serine 207 (acyl-ester intermediate) is an active-site residue. A disulfide bridge links cysteine 259 with cysteine 271. N-linked (GlcNAc...) asparagine glycosylation is present at asparagine 421. Residue histidine 467 is the Charge relay system of the active site. N-linked (GlcNAc...) asparagine glycosylation is present at asparagine 507. A disulfide bridge links cysteine 515 with cysteine 536.

It belongs to the type-B carboxylesterase/lipase family.

Its subcellular location is the secreted. The catalysed reaction is a carboxylic ester + H2O = an alcohol + a carboxylate + H(+). This Drosophila miranda (Fruit fly) protein is Esterase-5C (Est-5C).